A 570-amino-acid polypeptide reads, in one-letter code: Hydroxylamine reductase (570 aa).

The [4Fe-4S] cluster site is built by C5, C8, C17, and C23. Positions 266, 290, 334, 425, 453, 478, 513, and 515 each coordinate hybrid [4Fe-2O-2S] cluster. C425 carries the cysteine persulfide modification.

The protein belongs to the HCP family. The cofactor is [4Fe-4S] cluster. Hybrid [4Fe-2O-2S] cluster serves as cofactor.

The protein localises to the cytoplasm. The catalysed reaction is A + NH4(+) + H2O = hydroxylamine + AH2 + H(+). Its function is as follows. Catalyzes the reduction of hydroxylamine to form NH(3) and H(2)O. In Clostridium botulinum (strain Loch Maree / Type A3), this protein is Hydroxylamine reductase.